A 672-amino-acid polypeptide reads, in one-letter code: Probable copper-transporting P-type ATPase B (672 aa).

Basic and acidic residues predominate over residues 1-17 (MEHHSHQEHENHTSHGN). The interval 1–22 (MEHHSHQEHENHTSHGNHEHHH) is disordered. Helical transmembrane passes span 30–50 (FFISLIFAIPIIILSPMMGVK), 55–75 (ISFTGSDWIVLILATILFFYG), 93–113 (GMMTLVALGISVAYIYSLYAF), 125–145 (TMDFFWELATLILIMLLGHWI), 282–302 (GYLFYFAVSIGLISFIVWMLI), and 313–333 (LVTVLVIACPHALGLAIPLVT). Residue aspartate 365 is the 4-aspartylphosphate intermediate of the active site. 2 residues coordinate Mg(2+): aspartate 563 and aspartate 567. Transmembrane regions (helical) follow at residues 621 to 643 (LWWGAGYNVIAVPLAAGILASIG) and 647 to 669 (SPAVGAILMSLSTIIVAINAFTL).

This sequence belongs to the cation transport ATPase (P-type) (TC 3.A.3) family. Type IB subfamily.

The protein resides in the cell membrane. The enzyme catalyses Cu(+)(in) + ATP + H2O = Cu(+)(out) + ADP + phosphate + H(+). Its function is as follows. Involved in copper transport. This is Probable copper-transporting P-type ATPase B (copB) from Staphylococcus aureus.